The sequence spans 522 residues: MKKYQFLKSNLLQNQNINELFLQYLKNDSNIGVIKSIVDGVVIIEGLSNVKAGEMLQFSNDIQGMALNLNSETVSAVLFGDETKIKPGEYVEGTGNIISVPVGMSLLGRVVNALGQPIDNKGDFPGSELKQVEVKAPGIITRQSVNEPMITGVKAIDCLVPVGRGQRELVIGDRQTGKTSICLDAVLNQKYENSKNKKNALYCIYTAIGQKRSSISKLVTLLEKTNSLEYSIIVAATASEAAPLQYLAPYTGCVIGEYFRDNGKHALIIYDDLSKQAVAYRQMSLLLRRPPGREAYPGDIFYLHSRLLERAAKLNKNFGGGSLTALPVVETQAGDVSAYIPTNVISITDGQIFLETNLFYNGIRPAVNVGLSVSRVGSAAQILAIKKLAGSLKLELAQYREALSFAQFGSDLDETTKNLLSRGNMLTELLNQNRFTPIPIENQFVLMYSGIKGFLTNVNNKVIRSYENELFNRISNYSVFNTNVILLSNNEYYKKKNNNNVVAFFISYFKFITTNIFGFSAK.

172 to 179 (GDRQTGKT) contacts ATP.

It belongs to the ATPase alpha/beta chains family. In terms of assembly, F-type ATPases have 2 components, CF(1) - the catalytic core - and CF(0) - the membrane proton channel. CF(1) has five subunits: alpha(3), beta(3), gamma(1), delta(1), epsilon(1). CF(0) has three main subunits: a, b and c.

The protein resides in the mitochondrion. It is found in the mitochondrion inner membrane. In terms of biological role, mitochondrial membrane ATP synthase (F(1)F(0) ATP synthase or Complex V) produces ATP from ADP in the presence of a proton gradient across the membrane which is generated by electron transport complexes of the respiratory chain. F-type ATPases consist of two structural domains, F(1) - containing the extramembraneous catalytic core, and F(0) - containing the membrane proton channel, linked together by a central stalk and a peripheral stalk. During catalysis, ATP synthesis in the catalytic domain of F(1) is coupled via a rotary mechanism of the central stalk subunits to proton translocation. Subunits alpha and beta form the catalytic core in F(1). Rotation of the central stalk against the surrounding alpha(3)beta(3) subunits leads to hydrolysis of ATP in three separate catalytic sites on the beta subunits. Subunit alpha does not bear the catalytic high-affinity ATP-binding sites. In Acanthamoeba castellanii (Amoeba), this protein is ATP synthase subunit alpha, mitochondrial (ATP1).